The following is a 465-amino-acid chain: MASKNYDDVLKGKYPAKEHARRVVEVIRSSQPDVSGVLYLEGQKTKMIEDNDSEEHFRQRRYFYYLTGCELPDCYLTYDIATSRSTLYIPPVDPESVIWSGLPMSALEALQKYDVDEVRYTHEVNAALTSLAEAAPSSTVYAIPNQVSDSITFLGFGAKNFDVLKPAIERARVVKSDYEIALIAKANDISGAAHLAVLKRVRHVSNERELYATFLAECISRGAPHMAYHSIVAAGRAAATLHYVKNDEPTAGKLNLLLDAACELNCYASDITRTFPISGSFTPESRAIYDTVLRMQLETLAMLKEGVRWDDVHIHAHRVAIEGLLAAGIFKKGFSVDEILESRTSVAFFPHGLGHYLGMDTHDTGGNANYQDKDSMFRYLRVRGTLPAGSVITVEPGIYFCNFIIEPYLKDEKHSKYIDAAVLDKYWDVGGVRIEDNVVITKDGYDNLTTAVKDAKEMEKIISSS.

Positions 259, 270, 395, and 435 each coordinate Mn(2+).

Belongs to the peptidase M24B family. Mn(2+) is required as a cofactor.

It carries out the reaction Release of any N-terminal amino acid, including proline, that is linked to proline, even from a dipeptide or tripeptide.. Functionally, catalyzes the removal of a penultimate prolyl residue from the N-termini of peptides. The sequence is that of Probable Xaa-Pro aminopeptidase PEPP (PEPP) from Pyricularia oryzae (strain 70-15 / ATCC MYA-4617 / FGSC 8958) (Rice blast fungus).